Consider the following 160-residue polypeptide: Eukaryotic translation initiation factor 5A-1/2 (160 aa).

Positions 1–12 are enriched in basic and acidic residues; that stretch reads MSDEEHHFESKA. A disordered region spans residues 1–21; that stretch reads MSDEEHHFESKADAGASKTYP. K52 carries the post-translational modification Hypusine.

This sequence belongs to the eIF-5A family. Post-translationally, lys-52 undergoes hypusination, a unique post-translational modification that consists in the addition of a butylamino group from spermidine to lysine side chain, leading to the formation of the unusual amino acid hypusine. eIF-5As are the only known proteins to undergo this modification, which is essential for their function.

Translation factor that promotes translation elongation and termination, particularly upon ribosome stalling at specific amino acid sequence contexts. Binds between the exit (E) and peptidyl (P) site of the ribosome and promotes rescue of stalled ribosome: specifically required for efficient translation of polyproline-containing peptides as well as other motifs that stall the ribosome. Acts as a ribosome quality control (RQC) cofactor by joining the RQC complex to facilitate peptidyl transfer during CAT tailing step. In Solanum tuberosum (Potato), this protein is Eukaryotic translation initiation factor 5A-1/2 (EIF5A1).